Here is a 140-residue protein sequence, read N- to C-terminus: ATP synthase epsilon chain (140 aa).

Belongs to the ATPase epsilon chain family. F-type ATPases have 2 components, CF(1) - the catalytic core - and CF(0) - the membrane proton channel. CF(1) has five subunits: alpha(3), beta(3), gamma(1), delta(1), epsilon(1). CF(0) has three main subunits: a, b and c.

Its subcellular location is the cell inner membrane. In terms of biological role, produces ATP from ADP in the presence of a proton gradient across the membrane. The protein is ATP synthase epsilon chain of Vibrio vulnificus (strain CMCP6).